Here is a 773-residue protein sequence, read N- to C-terminus: 4'-phosphopantetheine phosphatase (773 aa).

An N-acetylalanine modification is found at A2. The segment at 2–402 (AECRASGGGS…APELCPTQRA (401 aa)) is pantothenate kinase. Acetyl-CoA is bound by residues S196 and S199. Y320 bears the 3'-nitrotyrosine mark. The 4'-phosphopantetheine phosphatase stretch occupies residues 403–773 (RSGTFDLLEM…VIFKYEVPAE (371 aa)). A Phosphoserine modification is found at S404. T406 bears the Phosphothreonine mark. The Mn(2+) site is built by D623, N624, and D659. The Subfamily II EGMGR motif signature appears at 724–728 (EGMGR).

It in the N-terminal section; belongs to the type II pantothenate kinase family. In the C-terminal section; belongs to the damage-control phosphatase family. Phosphopantetheine phosphatase (II) subfamily. In terms of assembly, homodimer. Interacts with PKM. Mn(2+) serves as cofactor. The cofactor is Ni(2+).

Its subcellular location is the cytoplasm. It catalyses the reaction (R)-4'-phosphopantetheine + H2O = (R)-pantetheine + phosphate. The catalysed reaction is (R)-4'-phosphopantetheine sulfonate + H2O = (R)-pantetheine sulfonate + phosphate. The enzyme catalyses (R)-4'-phospho-S-sulfopantetheine + H2O = (R)-S-sulfopantetheine + phosphate. Its activity is regulated as follows. Activity is strongly promoted by Co(2+), Ni(2+), Mg(2+) and Mn(2+). Activity is inhibited by EDTA. Phosphatase which shows a preference for 4'-phosphopantetheine and its oxidatively damaged forms (sulfonate or S-sulfonate), providing strong indirect evidence that the phosphatase activity pre-empts damage in the coenzyme A (CoA) pathway. Hydrolyzing excess 4'-phosphopantetheine could constitute a directed overflow mechanism to prevent its oxidation to the S-sulfonate, sulfonate, or other forms. Hydrolyzing 4'-phosphopantetheine sulfonate or S-sulfonate would forestall their conversion to inactive forms of CoA and acyl carrier protein. May play a role in the physiological regulation of CoA intracellular levels. This is 4'-phosphopantetheine phosphatase from Rattus norvegicus (Rat).